The sequence spans 502 residues: Glycerol kinase (502 aa).

ADP is bound at residue threonine 14. Residues threonine 14, threonine 15, and serine 16 each coordinate ATP. Sn-glycerol 3-phosphate is bound at residue threonine 14. Position 18 (arginine 18) interacts with ADP. Arginine 84, glutamate 85, and tyrosine 136 together coordinate sn-glycerol 3-phosphate. Residues arginine 84, glutamate 85, and tyrosine 136 each coordinate glycerol. Histidine 232 bears the Phosphohistidine; by HPr mark. Residue aspartate 246 coordinates sn-glycerol 3-phosphate. Positions 246 and 247 each coordinate glycerol. ADP is bound by residues threonine 268 and glycine 311. 4 residues coordinate ATP: threonine 268, glycine 311, glutamine 315, and glycine 412. Residues glycine 412 and asparagine 416 each contribute to the ADP site.

This sequence belongs to the FGGY kinase family. As to quaternary structure, homotetramer and homodimer (in equilibrium). The phosphoenolpyruvate-dependent sugar phosphotransferase system (PTS), including enzyme I, and histidine-containing protein (HPr) are required for the phosphorylation, which leads to the activation of the enzyme.

It catalyses the reaction glycerol + ATP = sn-glycerol 3-phosphate + ADP + H(+). It functions in the pathway polyol metabolism; glycerol degradation via glycerol kinase pathway; sn-glycerol 3-phosphate from glycerol: step 1/1. Its activity is regulated as follows. Activated by phosphorylation and inhibited by fructose 1,6-bisphosphate (FBP). Functionally, key enzyme in the regulation of glycerol uptake and metabolism. Catalyzes the phosphorylation of glycerol to yield sn-glycerol 3-phosphate. This chain is Glycerol kinase, found in Streptococcus pneumoniae (strain ATCC 700669 / Spain 23F-1).